Reading from the N-terminus, the 141-residue chain is Transmembrane protein 216 (141 aa).

4 helical membrane-spanning segments follow: residues 15-35 (VLFF…LLIF), 49-69 (LVLD…RLFF), 82-102 (LGIS…YLLL), and 115-135 (SILL…LATF).

Part of the tectonic-like complex (also named B9 complex). Interacts with TMEM107.

It is found in the membrane. Its subcellular location is the cytoplasm. The protein localises to the cytoskeleton. It localises to the cilium basal body. Part of the tectonic-like complex which is required for tissue-specific ciliogenesis and may regulate ciliary membrane composition. The chain is Transmembrane protein 216 (Tmem216) from Mus musculus (Mouse).